The chain runs to 190 residues: Nucleoside triphosphate pyrophosphatase (190 aa).

Asp-69 acts as the Proton acceptor in catalysis.

It belongs to the Maf family. Requires a divalent metal cation as cofactor.

The protein resides in the cytoplasm. It catalyses the reaction a ribonucleoside 5'-triphosphate + H2O = a ribonucleoside 5'-phosphate + diphosphate + H(+). The catalysed reaction is a 2'-deoxyribonucleoside 5'-triphosphate + H2O = a 2'-deoxyribonucleoside 5'-phosphate + diphosphate + H(+). In terms of biological role, nucleoside triphosphate pyrophosphatase. May have a dual role in cell division arrest and in preventing the incorporation of modified nucleotides into cellular nucleic acids. The chain is Nucleoside triphosphate pyrophosphatase from Helicobacter pylori (strain HPAG1).